The sequence spans 742 residues: Photosystem I P700 chlorophyll a apoprotein A2 (742 aa).

Transmembrane regions (helical) follow at residues 46–69 (LFST…FHIA), 135–158 (LFQG…LHLQ), 175–199 (LNHH…HVAI), 273–291 (IAHH…GHMY), 336–359 (LHFQ…QHMG), 375–401 (SALY…IFFV), 423–445 (ALIS…IYVH), and 525–543 (FLVH…LILI). Positions 567 and 576 each coordinate [4Fe-4S] cluster. The next 2 helical transmembrane spans lie at 583-604 (ATYL…YWHW) and 651-673 (LSPW…MFLI). Residues H662, M670, and Y678 each contribute to the divinyl chlorophyll a site. W679 serves as a coordination point for phylloquinone. The chain crosses the membrane as a helical span at residues 715–735 (LVGLTHFTVGNFVTFGAFVIA).

This sequence belongs to the PsaA/PsaB family. In terms of assembly, the PsaA/B heterodimer binds the P700 divinyl chlorophyll special pair and subsequent electron acceptors. PSI consists of a core antenna complex that captures photons, and an electron transfer chain that converts photonic excitation into a charge separation. The cyanobacterial PSI reaction center is composed of one copy each of PsaA,B,C,D,E,F,I,J,K,L,M and X, and forms trimeric complexes. PSI electron transfer chain: 5 divinyl chlorophyll a, 1 divinyl chlorophyll a', 2 phylloquinones and 3 4Fe-4S clusters. PSI core antenna: 90 divinyl chlorophyll a, 22 carotenoids, 3 phospholipids and 1 galactolipid. P700 is a divinyl chlorophyll a/divinyl chlorophyll a' dimer, A0 is one or more divinyl chlorophyll a, A1 is one or both phylloquinones and FX is a shared 4Fe-4S iron-sulfur center. is required as a cofactor.

The protein localises to the cellular thylakoid membrane. The catalysed reaction is reduced [plastocyanin] + hnu + oxidized [2Fe-2S]-[ferredoxin] = oxidized [plastocyanin] + reduced [2Fe-2S]-[ferredoxin]. PsaA and PsaB bind P700, the primary electron donor of photosystem I (PSI), as well as the electron acceptors A0, A1 and FX. PSI is a plastocyanin/cytochrome c6-ferredoxin oxidoreductase, converting photonic excitation into a charge separation, which transfers an electron from the donor P700 chlorophyll pair to the spectroscopically characterized acceptors A0, A1, FX, FA and FB in turn. Oxidized P700 is reduced on the lumenal side of the thylakoid membrane by plastocyanin or cytochrome c6. The chain is Photosystem I P700 chlorophyll a apoprotein A2 from Prochlorococcus marinus (strain NATL2A).